A 178-amino-acid polypeptide reads, in one-letter code: Large ribosomal subunit protein uL6 (178 aa).

Belongs to the universal ribosomal protein uL6 family. As to quaternary structure, part of the 50S ribosomal subunit.

Its function is as follows. This protein binds to the 23S rRNA, and is important in its secondary structure. It is located near the subunit interface in the base of the L7/L12 stalk, and near the tRNA binding site of the peptidyltransferase center. This chain is Large ribosomal subunit protein uL6, found in Streptococcus sanguinis (strain SK36).